The following is a 158-amino-acid chain: Transcription elongation factor GreA (158 aa).

It belongs to the GreA/GreB family.

Functionally, necessary for efficient RNA polymerase transcription elongation past template-encoded arresting sites. The arresting sites in DNA have the property of trapping a certain fraction of elongating RNA polymerases that pass through, resulting in locked ternary complexes. Cleavage of the nascent transcript by cleavage factors such as GreA or GreB allows the resumption of elongation from the new 3'terminus. GreA releases sequences of 2 to 3 nucleotides. The protein is Transcription elongation factor GreA of Rhizobium leguminosarum bv. trifolii (strain WSM2304).